A 273-amino-acid chain; its full sequence is 2,3,4,5-tetrahydropyridine-2,6-dicarboxylate N-succinyltransferase (273 aa).

Residues Arg-104 and Asp-141 each contribute to the substrate site.

It belongs to the transferase hexapeptide repeat family. Homotrimer.

Its subcellular location is the cytoplasm. The catalysed reaction is (S)-2,3,4,5-tetrahydrodipicolinate + succinyl-CoA + H2O = (S)-2-succinylamino-6-oxoheptanedioate + CoA. It participates in amino-acid biosynthesis; L-lysine biosynthesis via DAP pathway; LL-2,6-diaminopimelate from (S)-tetrahydrodipicolinate (succinylase route): step 1/3. The chain is 2,3,4,5-tetrahydropyridine-2,6-dicarboxylate N-succinyltransferase from Neisseria meningitidis serogroup C (strain 053442).